The primary structure comprises 298 residues: uncharacterized protein (298 aa).

The span at 1-17 (MLTKSAENKRNRKDDSM) shows a compositional bias: basic and acidic residues. The tract at residues 1 to 22 (MLTKSAENKRNRKDDSMRPGQQ) is disordered. The S1 motif domain maps to 167–227 (NKELTGTVYR…EDGSVNLSLL (61 aa)).

This is an uncharacterized protein from Bacillus subtilis (strain 168).